Here is a 420-residue protein sequence, read N- to C-terminus: Probable protein phosphatase 2C 73 (420 aa).

One can recognise a PPM-type phosphatase domain in the interval 33–336 (GVSMHTKQGW…DDCAVVCLFL (304 aa)). Aspartate 69 and glycine 70 together coordinate Mn(2+). Over residues 96-105 (LKTEQDPSSN) the composition is skewed to polar residues. The interval 96 to 119 (LKTEQDPSSNTDKETLEKSDCTSL) is disordered. Basic and acidic residues predominate over residues 106-115 (TDKETLEKSD). Positions 281 and 327 each coordinate Mn(2+).

The protein belongs to the PP2C family. Mg(2+) serves as cofactor. The cofactor is Mn(2+).

It carries out the reaction O-phospho-L-seryl-[protein] + H2O = L-seryl-[protein] + phosphate. The catalysed reaction is O-phospho-L-threonyl-[protein] + H2O = L-threonyl-[protein] + phosphate. This is Probable protein phosphatase 2C 73 from Oryza sativa subsp. japonica (Rice).